We begin with the raw amino-acid sequence, 295 residues long: Ribosomal protein L11 methyltransferase (295 aa).

Positions 150, 171, 193, and 232 each coordinate S-adenosyl-L-methionine.

This sequence belongs to the methyltransferase superfamily. PrmA family.

The protein localises to the cytoplasm. The enzyme catalyses L-lysyl-[protein] + 3 S-adenosyl-L-methionine = N(6),N(6),N(6)-trimethyl-L-lysyl-[protein] + 3 S-adenosyl-L-homocysteine + 3 H(+). Functionally, methylates ribosomal protein L11. The protein is Ribosomal protein L11 methyltransferase of Neisseria meningitidis serogroup C / serotype 2a (strain ATCC 700532 / DSM 15464 / FAM18).